Here is a 91-residue protein sequence, read N- to C-terminus: Probable Fe(2+)-trafficking protein (91 aa).

It belongs to the Fe(2+)-trafficking protein family. As to quaternary structure, monomer.

Its function is as follows. Could be a mediator in iron transactions between iron acquisition and iron-requiring processes, such as synthesis and/or repair of Fe-S clusters in biosynthetic enzymes. In Klebsiella pneumoniae subsp. pneumoniae (strain ATCC 700721 / MGH 78578), this protein is Probable Fe(2+)-trafficking protein.